The sequence spans 1403 residues: Envelopment polyprotein (1403 aa).

The signal sequence occupies residues 1–17; it reads MLLNIVLISNLACLAFA. Residues 18–209 lie on the Lumenal side of the membrane; sequence LPLKEGTRGS…ELMIESFCTN (192 aa). Asn40 carries an N-linked (GlcNAc...) asparagine; by host glycan. A helical transmembrane segment spans residues 210-230; it reads LELILLVTFILVGSVMMMILT. Topologically, residues 231–314 are cytoplasmic; the sequence is KTYIVYVFIP…PKTRKLCKSK (84 aa). Residues 315–335 traverse the membrane as a helical segment; it reads ISNIVLCVITSLIFFSFITPI. Residues 336-361 are Lumenal-facing; sequence SSQCIDIEKLPDEYITCKRELANIKS. A helical transmembrane segment spans residues 362–382; sequence LTIDDTYSFIYSCTCIIVLIL. Topologically, residues 383–448 are cytoplasmic; the sequence is LKKAAKYILY…FKFESSYNRT (66 aa). The helical transmembrane segment at 449–469 threads the bilayer; the sequence is GLIIFMLLLVPTIVMTQETSI. Residues 470-1361 are Lumenal-facing; the sequence is NCKNIQSTQL…GNLSFYWRLT (892 aa). Cys471 and Cys487 are joined by a disulfide. The N-linked (GlcNAc...) asparagine; by host glycan is linked to Asn493. Cystine bridges form between Cys523–Cys550, Cys580–Cys589, and Cys591–Cys598. N-linked (GlcNAc...) asparagine; by host glycans are attached at residues Asn686 and Asn1353. A helical transmembrane segment spans residues 1362–1382; it reads IYIIISLIMLILFLYILIPLC. Over 1383 to 1403 the chain is Cytoplasmic; the sequence is KRLKGLLEYNERIYQMENKFK.

It belongs to the nairovirus envelope glycoprotein family. Heterodimer with glycoprotein C; in prefusion state. In terms of assembly, heterodimer with glycoprotein N; in prefusion state. Homotrimeric; in postfusion state. Specific enzymatic cleavage by host MBTPS1/S1P/SKI-1 endopeptidase yield glycoprotein N. Specific enzymatic cleavages by host furin-like protease and MBTPS1/S1P endopeptidase yield GP38. Post-translationally, glycosylated.

It localises to the host endoplasmic reticulum membrane. Its subcellular location is the virion membrane. The protein resides in the host Golgi apparatus membrane. Glycoprotein C and glycoprotein N interact with each other and are present at the surface of the virion. Glycoprotein N probably locks the Gn-Gc complex in a prefusion state. Glycoprotein N and glycoprotein C are able to attach the virion to host cell receptors. This attachment induces virion internalization predominantly through clathrin-dependent endocytosis. Its function is as follows. Glycoprotein C and glycoprotein N interact with each other and are present at the surface of the virion. The spikes at the surface of the virion are formed by an N-terminal extension of glycoprotein C. Glycoprotein N and glycoprotein C are able to attach the virion to host cell receptors. This attachment induces virion internalization predominantly through clathrin-dependent endocytosis. Class II fusion protein that promotes fusion of viral membrane with host endosomal membrane after endocytosis of the virion. Exposure to potassium is necessary for the conformational change leading to fusion. This Bos taurus (Bovine) protein is Envelopment polyprotein (GP).